The primary structure comprises 113 residues: Putative hemolysin E-like protein (113 aa).

This sequence belongs to the hemolysin E family.

This is Putative hemolysin E-like protein from Shigella flexneri.